We begin with the raw amino-acid sequence, 149 residues long: Small ribosomal subunit protein eS19 (149 aa).

The protein belongs to the eukaryotic ribosomal protein eS19 family.

The protein is Small ribosomal subunit protein eS19 (RPS19) of Mya arenaria (Soft-shell clam).